Here is a 366-residue protein sequence, read N- to C-terminus: Class I histocompatibility antigen, Gogo-C*0201 alpha chain (366 aa).

The signal sequence occupies residues 1–24; the sequence is MRVMAPRTLILPLSGALALTETWA. An alpha-1 region spans residues 25 to 114; that stretch reads GSHSMRYFYT…LRGYYNQSED (90 aa). The Extracellular portion of the chain corresponds to 25-308; that stretch reads GSHSMRYFYT…EPSSQPTIPI (284 aa). The N-linked (GlcNAc...) asparagine glycan is linked to asparagine 110. An alpha-2 region spans residues 115 to 206; that stretch reads GSHTLQSMYG…ENGKETLQRA (92 aa). Cystine bridges form between cysteine 125–cysteine 188 and cysteine 227–cysteine 283. The tract at residues 207-298 is alpha-3; that stretch reads EPPKTHVTHH…GLPEPLTLRW (92 aa). One can recognise an Ig-like C1-type domain in the interval 209 to 297; that stretch reads PKTHVTHHPL…EGLPEPLTLR (89 aa). A connecting peptide region spans residues 299–308; the sequence is EPSSQPTIPI. Residues 309-333 traverse the membrane as a helical segment; that stretch reads VGIVVGLAVLVVLAVLGAVVTAMMC. The Cytoplasmic segment spans residues 334 to 366; the sequence is RRKSSGGKGGSCSQAACSNSAQGSDESLITCKA.

Belongs to the MHC class I family. As to quaternary structure, heterodimer of an alpha chain and a beta chain (beta-2-microglobulin).

Its subcellular location is the membrane. Functionally, involved in the presentation of foreign antigens to the immune system. The chain is Class I histocompatibility antigen, Gogo-C*0201 alpha chain from Gorilla gorilla gorilla (Western lowland gorilla).